A 646-amino-acid polypeptide reads, in one-letter code: EF-hand calcium-binding domain-containing protein 6 (646 aa).

EF-hand domains follow at residues 1–27 (FLET…FDIP), 28–63 (LTPR…NYSP), 109–144 (DCYQ…CGCS), 214–249 (SSQL…FCHK), 321–356 (SHYH…NVQI), and 357–392 (LTDE…ERAA). T29 carries the post-translational modification Phosphothreonine. Residues 390 to 452 (RAATPTATGD…TTAIPGTPPL (63 aa)) form a disordered region. Positions 432–446 (KPQSHPCTAASTTAI) are enriched in polar residues. The residue at position 435 (S435) is a Phosphoserine. 2 positions are modified to phosphothreonine: T439 and T449. The tract at residues 448–646 (GTPPLQNCDP…YNDFLRAFLQ (199 aa)) is interaction with PARK7. EF-hand domains follow at residues 468–503 (GCWR…FNLD), 504–539 (ISKE…LLKA), 579–614 (HCWR…YSIN), and 615–646 (LSEE…AFLQ). Residues 552–646 (NAHKMKDSGA…YNDFLRAFLQ (95 aa)) form an interaction with AR region.

Microtubule inner protein component of sperm flagellar doublet microtubules. Binds PARK7. Part of a ternary complex containing PARK7, EFCAB6/DJBP and AR.

It is found in the nucleus. The protein localises to the cytoplasm. Its subcellular location is the cytoskeleton. It localises to the flagellum axoneme. In terms of biological role, negatively regulates the androgen receptor by recruiting histone deacetylase complex, and protein DJ-1 antagonizes this inhibition by abrogation of this complex. Microtubule inner protein (MIP) part of the dynein-decorated doublet microtubules (DMTs) in cilia axoneme, which is required for motile cilia beating. This Macaca fascicularis (Crab-eating macaque) protein is EF-hand calcium-binding domain-containing protein 6 (EFCAB6).